We begin with the raw amino-acid sequence, 217 residues long: Adenylate kinase (217 aa).

Position 10 to 15 (10 to 15 (GAGKGT)) interacts with ATP. The interval 30 to 59 (STGDIFRSNVSQGTPLGVQAKRYMDAGELV) is NMP. Residues Thr-31, Arg-36, 57–59 (ELV), 85–88 (GFPR), and Gln-92 each bind AMP. An LID region spans residues 126-163 (GRRTCRGCGKVWHVEFDAPSQEGRCDRCGAELFQRDDD). Arg-127 serves as a coordination point for ATP. 4 residues coordinate Zn(2+): Cys-130, Cys-133, Cys-150, and Cys-153. Residues Arg-160 and Arg-171 each contribute to the AMP site. ATP is bound at residue Gly-199.

It belongs to the adenylate kinase family. As to quaternary structure, monomer.

The protein resides in the cytoplasm. It carries out the reaction AMP + ATP = 2 ADP. The protein operates within purine metabolism; AMP biosynthesis via salvage pathway; AMP from ADP: step 1/1. Its function is as follows. Catalyzes the reversible transfer of the terminal phosphate group between ATP and AMP. Plays an important role in cellular energy homeostasis and in adenine nucleotide metabolism. The sequence is that of Adenylate kinase from Salinispora tropica (strain ATCC BAA-916 / DSM 44818 / JCM 13857 / NBRC 105044 / CNB-440).